The sequence spans 60 residues: Large ribosomal subunit protein uL30 (60 aa).

Belongs to the universal ribosomal protein uL30 family. In terms of assembly, part of the 50S ribosomal subunit.

In Syntrophomonas wolfei subsp. wolfei (strain DSM 2245B / Goettingen), this protein is Large ribosomal subunit protein uL30.